A 207-amino-acid chain; its full sequence is Homeobox protein BarH-like 1 (207 aa).

The segment at residues 95–154 (GRRSRTVFTELQLMGLEKRFEKQKYLSTPDRIDLAESLGLSQLQVKTWYQNRRMKWKKIV) is a DNA-binding region (homeobox). The segment at 157 to 207 (GGGLESPTKPKGRPKKNSIPSSEQLSEQERAKETEKPPESPGEPSERQQEE) is disordered. The span at 183-207 (EQERAKETEKPPESPGEPSERQQEE) shows a compositional bias: basic and acidic residues.

It belongs to the BAR homeobox family. Expressed predominantly in the facial primordia, developing stomach, and proximal limbs.

It is found in the nucleus. Its function is as follows. Transcription factor, which is involved in craniofacial development, in odontogenic region definition, and in stomach organogenesis. Binds to a regulatory module of the NCAM promoter. This Gallus gallus (Chicken) protein is Homeobox protein BarH-like 1 (BARX1).